The following is a 255-amino-acid chain: Small ribosomal subunit protein eS1 (255 aa).

The residue at position 2 (alanine 2) is an N-acetylalanine; partial.

Belongs to the eukaryotic ribosomal protein eS1 family. Component of the small ribosomal subunit. Mature ribosomes consist of a small (40S) and a large (60S) subunit. The 40S subunit contains about 33 different proteins and 1 molecule of RNA (18S). The 60S subunit contains about 49 different proteins and 3 molecules of RNA (25S, 5.8S and 5S).

The protein localises to the cytoplasm. The polypeptide is Small ribosomal subunit protein eS1 (Vanderwaltozyma polyspora (strain ATCC 22028 / DSM 70294 / BCRC 21397 / CBS 2163 / NBRC 10782 / NRRL Y-8283 / UCD 57-17) (Kluyveromyces polysporus)).